A 377-amino-acid chain; its full sequence is Anhydro-N-acetylmuramic acid kinase (377 aa).

Position 18-25 (18-25 (GTSADGID)) interacts with ATP.

Belongs to the anhydro-N-acetylmuramic acid kinase family.

It carries out the reaction 1,6-anhydro-N-acetyl-beta-muramate + ATP + H2O = N-acetyl-D-muramate 6-phosphate + ADP + H(+). It functions in the pathway amino-sugar metabolism; 1,6-anhydro-N-acetylmuramate degradation. The protein operates within cell wall biogenesis; peptidoglycan recycling. Catalyzes the specific phosphorylation of 1,6-anhydro-N-acetylmuramic acid (anhMurNAc) with the simultaneous cleavage of the 1,6-anhydro ring, generating MurNAc-6-P. Is required for the utilization of anhMurNAc either imported from the medium or derived from its own cell wall murein, and thus plays a role in cell wall recycling. This chain is Anhydro-N-acetylmuramic acid kinase, found in Xanthomonas campestris pv. campestris (strain 8004).